The sequence spans 641 residues: WW domain-binding protein 11 (641 aa).

Residues 1-11 show a composition bias toward polar residues; sequence MGRRSTSSTKS. The segment at 1–37 is disordered; it reads MGRRSTSSTKSGKFMNPTDQARKEARKRELKKNKKQR. The segment at 1–45 is required for nuclear import; that stretch reads MGRRSTSSTKSGKFMNPTDQARKEARKRELKKNKKQRMMVRAAVL. The residue at position 13 (Lys-13) is an N6-acetyllysine. Positions 28-37 are enriched in basic residues; it reads RELKKNKKQR. Residues 75 to 133 adopt a coiled-coil conformation; the sequence is EKVLKDKRKKLRETFERILRLYEKENPDIYKELRKLEVEYEQKRAQLSQYFDAVKNAQH. Residue Ser-181 is modified to Phosphoserine. Residues 186–213 are disordered; that stretch reads LGHGVPRLPPGRKPPGPPPGPPPPQVLQ. Arg-192 carries the omega-N-methylarginine modification. Positions 192–210 are enriched in pro residues; the sequence is RLPPGRKPPGPPPGPPPPQ. The segment at 217–221 is interaction with PP1; the sequence is RKVGF. Tyr-236 is modified (phosphotyrosine). Residues 236-549 are disordered; the sequence is YSPELAQRGH…LIQRPKADDA (314 aa). Ser-237 is modified (phosphoserine). A compositionally biased stretch (acidic residues) spans 253 to 263; the sequence is SEDDGYPEDMD. Positions 276-304 are enriched in basic and acidic residues; sequence TDRSDAESDGDEFGHRDDSERDNTEEKKS. Phosphoserine occurs at positions 279 and 283. The tract at residues 306–310 is interaction with PP1; the sequence is LSVRF. The segment covering 351–365 has biased composition (acidic residues); the sequence is EFSEEEDDDDSEDSE. Phosphoserine occurs at positions 353, 361, and 364. Positions 366–380 are enriched in basic and acidic residues; the sequence is AEKPSQKQHKEDSHA. Residues 381-404 are compositionally biased toward low complexity; that stretch reads DGSSAASSQQQAPPQAVPPSQIQA. Pro residues-rich tracts occupy residues 405-447, 456-504, and 510-530; these read PPMP…PPGM, RLLP…PPRP, and PLVP…PLPN. Residues 455 to 466 carry the PGR motif; that stretch reads PRLLPPGPPPGR. A Glycyl lysine isopeptide (Lys-Gly) (interchain with G-Cter in SUMO2) cross-link involves residue Lys-557. N6-acetyllysine is present on Lys-565. Residue Lys-572 forms a Glycyl lysine isopeptide (Lys-Gly) (interchain with G-Cter in SUMO2) linkage. A disordered region spans residues 588 to 623; it reads ENKGATAVPQRRSEEDSAVPVAKAAPRSGPSVPVSV. Phosphoserine is present on Ser-600.

Interacts with PPP1CA, PPP1CB and PPP1CC. Interacts via the PGR motif with PQBP1 in the nucleus. Interacts with the WW domains of WBP4.

It is found in the nucleus. The protein localises to the cytoplasm. Activates pre-mRNA splicing. May inhibit PP1 phosphatase activity. This is WW domain-binding protein 11 (Wbp11) from Rattus norvegicus (Rat).